The following is an 88-amino-acid chain: Small ribosomal subunit protein uS15c (88 aa).

Belongs to the universal ribosomal protein uS15 family. Part of the 30S ribosomal subunit.

It is found in the plastid. It localises to the chloroplast. The chain is Small ribosomal subunit protein uS15c (rps15) from Crucihimalaya wallichii (Rock-cress).